The chain runs to 337 residues: RNA 3'-terminal phosphate cyclase (337 aa).

ATP contacts are provided by residues Gln100 and 281 to 285 (YMGDQ). The active-site Tele-AMP-histidine intermediate is the His306.

Belongs to the RNA 3'-terminal cyclase family. Type 1 subfamily.

The protein resides in the cytoplasm. It catalyses the reaction a 3'-end 3'-phospho-ribonucleotide-RNA + ATP = a 3'-end 2',3'-cyclophospho-ribonucleotide-RNA + AMP + diphosphate. Functionally, catalyzes the conversion of 3'-phosphate to a 2',3'-cyclic phosphodiester at the end of RNA. The mechanism of action of the enzyme occurs in 3 steps: (A) adenylation of the enzyme by ATP; (B) transfer of adenylate to an RNA-N3'P to produce RNA-N3'PP5'A; (C) and attack of the adjacent 2'-hydroxyl on the 3'-phosphorus in the diester linkage to produce the cyclic end product. The biological role of this enzyme is unknown but it is likely to function in some aspects of cellular RNA processing. This chain is RNA 3'-terminal phosphate cyclase (rtcA), found in Methanothermobacter thermautotrophicus (strain ATCC 29096 / DSM 1053 / JCM 10044 / NBRC 100330 / Delta H) (Methanobacterium thermoautotrophicum).